We begin with the raw amino-acid sequence, 485 residues long: Skb1 localization factor 1 (485 aa).

A sufficient for interaction with Skb1 region spans residues 1–200; it reads MSSIIQNPIE…VDDSDLTPHT (200 aa). Disordered stretches follow at residues 117–230, 286–416, and 446–466; these read NAAN…MSRN, ETQH…LRRS, and TTQE…KPEK. Residues 171–182 are compositionally biased toward polar residues; sequence SRSSRYSKTSDL. A compositionally biased stretch (basic and acidic residues) spans 189 to 198; that stretch reads RFVDDSDLTP. Composition is skewed to polar residues over residues 218–230 and 341–363; these read GRSS…MSRN and VGSS…QQDS. Position 222 is a phosphoserine (S222). Over residues 371 to 393 the composition is skewed to basic and acidic residues; that stretch reads SERSYRRVRDQYLSKPRLSDKNR. The segment covering 394–416 has biased composition (polar residues); it reads YSTFSEFPGQGTPSASQSNLRRS. Over residues 447–464 the composition is skewed to basic and acidic residues; that stretch reads TQERKPVVKPDSIKTVKP. Residues 451–485 are required and sufficient for plasma membrane anchoring; lysine-rich, may bind to anionic lipids in the plasma membrane; it reads KPVVKPDSIKTVKPEKKKSKGFFKKLMHKISHIFD. A Phosphoserine modification is found at S458.

Interacts with Skb1.

It localises to the cell membrane. Functionally, acts as a membrane anchor for Skb1 in forming plasma membrane microdomains. Promotes mitotic entry by sequestering mitotic inhibitor Skb1 from its regulatory targets Cdr1 and Wee1. The polypeptide is Skb1 localization factor 1 (Schizosaccharomyces pombe (strain 972 / ATCC 24843) (Fission yeast)).